Reading from the N-terminus, the 364-residue chain is Biotin synthase (364 aa).

The Radical SAM core domain maps to 68-303; that stretch reads CCGNTVDLCS…QQILRYAGGR (236 aa). [4Fe-4S] cluster is bound by residues cysteine 86, cysteine 90, and cysteine 93. Residues cysteine 131, cysteine 168, cysteine 228, and arginine 298 each coordinate [2Fe-2S] cluster.

This sequence belongs to the radical SAM superfamily. Biotin synthase family. Homodimer. Requires [4Fe-4S] cluster as cofactor. [2Fe-2S] cluster serves as cofactor.

It catalyses the reaction (4R,5S)-dethiobiotin + (sulfur carrier)-SH + 2 reduced [2Fe-2S]-[ferredoxin] + 2 S-adenosyl-L-methionine = (sulfur carrier)-H + biotin + 2 5'-deoxyadenosine + 2 L-methionine + 2 oxidized [2Fe-2S]-[ferredoxin]. Its pathway is cofactor biosynthesis; biotin biosynthesis; biotin from 7,8-diaminononanoate: step 2/2. Its function is as follows. Catalyzes the conversion of dethiobiotin (DTB) to biotin by the insertion of a sulfur atom into dethiobiotin via a radical-based mechanism. This is Biotin synthase from Microcystis aeruginosa (strain NIES-843 / IAM M-2473).